Reading from the N-terminus, the 263-residue chain is Transcription factor bHLH27 (263 aa).

Positions E32–A47 are enriched in low complexity. The interval E32–N61 is disordered. The segment covering S49–S58 has biased composition (polar residues). The bHLH domain occupies P50–L99.

As to quaternary structure, homodimer. In terms of tissue distribution, expressed constitutively in roots, leaves, stems, and flowers.

It localises to the nucleus. The sequence is that of Transcription factor bHLH27 (BHLH27) from Arabidopsis thaliana (Mouse-ear cress).